Consider the following 202-residue polypeptide: uncharacterized protein (202 aa).

Over 1 to 6 the chain is Cytoplasmic; the sequence is MITDFL. Residues 7 to 23 traverse the membrane as a helical; Signal-anchor for type II membrane protein segment; it reads LAFSILAVSTTLGVSNL. The Extracellular segment spans residues 24–202; it reads NKQCRDLLQC…KNGKTRGHSG (179 aa). The N-linked (GlcNAc...) asparagine glycan is linked to Asn53.

It localises to the membrane. This is an uncharacterized protein from Caenorhabditis elegans.